The primary structure comprises 549 residues: 65-kDa microtubule-associated protein 9 (549 aa).

Coiled coils occupy residues 36–123 (IEIE…ERKI), 160–199 (SLRK…CSVL), and 459–492 (GNRL…HQGQ). A disordered region spans residues 474–549 (EEKEQERRRK…SFSTPLSRHG (76 aa)). Basic residues predominate over residues 481–490 (RRKRDLKKHQ). 2 positions are modified to phosphoserine: S501 and S546. Residues 514 to 549 (VSTNKRFVSSPHTPQTDSPHSAKSNQSFSTPLSRHG) are compositionally biased toward polar residues.

This sequence belongs to the MAP65/ASE1 family. In terms of assembly, forms dimer. Binds to microtubules (MT).

It is found in the nucleus. It localises to the cytoplasm. Its subcellular location is the cytoskeleton. The protein resides in the spindle pole. The sequence is that of 65-kDa microtubule-associated protein 9 (MAP65-9) from Arabidopsis thaliana (Mouse-ear cress).